The following is an 88-amino-acid chain: MFGQRQSMIVYLHSLKHAKILRKYGNIHYISKRLKYAVVYCDMEQIEHMMQKLNKLPFVKKVEQSYRPFLKTEFENSRPDRAKEYDYS.

It belongs to the UPF0298 family.

The protein resides in the cytoplasm. The sequence is that of UPF0298 protein BcerKBAB4_3759 from Bacillus mycoides (strain KBAB4) (Bacillus weihenstephanensis).